A 235-amino-acid chain; its full sequence is Eukaryotic translation initiation factor 4E-1 (235 aa).

The tract at residues 1–36 is disordered; sequence MVVEETIKATSTEDLSNTIANQNPRGRGGDEDEELE. A compositionally biased stretch (polar residues) spans 8–24; sequence KATSTEDLSNTIANQNP. EIF4G-binding regions lie at residues 60–63 and 70–106; these read HPLE and FDNPSAKSKQATWGASIRPIYTFSTVEEFWSVYNNIH. Residues 78–83, lysine 110, and 128–129 contribute to the mRNA site; these read KQATWG and WE. Cysteine 133 and cysteine 171 are joined by a disulfide. Residues 154–163 are EIF4G-binding; sequence YTLLAMIGEQ. MRNA-binding positions include 178 to 183 and 223 to 227; these read RSGQDK and KKFDR.

Belongs to the eukaryotic initiation factor 4E family. EIF4F is a multi-subunit complex, the composition of which varies with external and internal environmental conditions. It is composed of at least EIF4A, EIF4E and EIF4G. EIF4E is also known to interact with other partners. In higher plants two isoforms of EIF4F have been identified, named isoform EIF4F and isoform EIF(iso)4F. Isoform EIF4F has subunits p220 and p26, whereas isoform EIF(iso)4F has subunits p82 and p28. In terms of assembly, (Microbial infection) Interacts with potyvirus viral genome-linked protein (VPg); this interaction is possible in susceptible hosts but impaired in resistant plants. According to the redox status, the Cys-133-Cys-171 disulfide bridge may have a role in regulating protein function by affecting its ability to bind capped mRNA.

It localises to the nucleus. It is found in the cytoplasm. Component of the protein complex eIF4F, which is involved in the recognition of the mRNA cap, ATP-dependent unwinding of 5'-terminal secondary structure and recruitment of mRNA to the ribosome. Recognizes and binds the 7-methylguanosine-containing mRNA cap during an early step in the initiation of protein synthesis and facilitates ribosome binding by inducing the unwinding of the mRNAs secondary structures. Key component of recessive resistance to potyviruses. Its function is as follows. (Microbial infection) Susceptibility host factor required for viral infection by recruiting viral RNAs to the host ribosomal complex via an interaction with viral genome-linked protein (VPg). This Citrullus lanatus (Watermelon) protein is Eukaryotic translation initiation factor 4E-1.